The sequence spans 313 residues: N(5)-(carboxyethyl)ornithine synthase (313 aa).

Pyruvate-binding residues include Arg15, Lys71, and His92. Gly171–Ala176 is an NADP(+) binding site.

It belongs to the AlaDH/PNT family. CEOS subfamily. As to quaternary structure, homotetramer.

The catalysed reaction is N(5)-[1(S)-1-carboxyethyl]-L-ornithine + NADP(+) + H2O = L-ornithine + pyruvate + NADPH + H(+). Is potently inhibited by the reaction product N(5)-(L-1-carboxyethyl)-L-ornithine. Its function is as follows. Catalyzes the NADPH-dependent reductive condensation between pyruvic acid and the side chain amino group of L-ornithine to form N(5)-(L-1-carboxyethyl)-L-ornithine. To a lesser extent, can also use L-lysine as substrate (yielding N(6)-(L-1-carboxyethyl)-L-lysine). NADH cannot replace NADPH in the condensation reaction. The protein is N(5)-(carboxyethyl)ornithine synthase (ceo) of Lactococcus lactis subsp. lactis (Streptococcus lactis).